Here is a 257-residue protein sequence, read N- to C-terminus: Phycoerythrobilin:ferredoxin oxidoreductase (257 aa).

Belongs to the HY2 family.

The enzyme catalyses (3Z)-phycoerythrobilin + oxidized 2[4Fe-4S]-[ferredoxin] = 15,16-dihydrobiliverdin + reduced 2[4Fe-4S]-[ferredoxin] + 2 H(+). In terms of biological role, catalyzes the two-electron reduction of the C2 and C3(1) diene system of 15,16-dihydrobiliverdin. The polypeptide is Phycoerythrobilin:ferredoxin oxidoreductase (Synechococcus sp. (strain CC9902)).